The following is a 390-amino-acid chain: Precorrin-6Y C(5,15)-methyltransferase [decarboxylating] (390 aa).

The protein belongs to the precorrin methyltransferase family.

It catalyses the reaction precorrin-6B + 2 S-adenosyl-L-methionine = precorrin-8X + 2 S-adenosyl-L-homocysteine + CO2 + 3 H(+). It participates in cofactor biosynthesis; adenosylcobalamin biosynthesis; cob(II)yrinate a,c-diamide from precorrin-2 (aerobic route): step 7/10. Its function is as follows. Catalyzes the methylation of both C-5 and C-15 in precorrin-6Y to form precorrin-8X. This is Precorrin-6Y C(5,15)-methyltransferase [decarboxylating] (cobL) from Mycobacterium tuberculosis (strain CDC 1551 / Oshkosh).